A 220-amino-acid chain; its full sequence is MOB kinase activator-like 3 (220 aa).

4 residues coordinate Zn(2+): Cys83, Cys88, His165, and His170.

This sequence belongs to the MOB1/phocein family.

The sequence is that of MOB kinase activator-like 3 (Mob3) from Drosophila melanogaster (Fruit fly).